Consider the following 1021-residue polypeptide: MGKGVGRDKYEPAAVSEHGDKKKAKKERDMDELKKEVSMDDHKLSLDELHRKYGTDLSRGLTTARAAEILARDGPNALTPPPTTPEWVKFCRQLFGGFSMLLWIGAILCFLAYGIQAATEEEPQNDNLYLGVVLSAVVIITGCFSYYQEAKSSKIMESFKNMVPQQALVIRNGEKMSINAEEVVIGDLVEVKGGDRIPADLRIISANGCKVDNSSLTGESEPQTRSPDFTNENPLETRNIAFFSTNCVKGTARGIVVYTGDRTVMGRIATLASGLEGGQTPIAAEIEHFIHIITGVAVFLGVSFFILSLILEYTWLEAVIFLIGIIVANVPEGLLATVTVCLTLTAKRMARKNCLVKNLEAVETLGSTSTICSDKTGTLTQNRMTVAHMWFDNQIHEADTTENQSGVSFDKSSATWLALSRIAGLCNRAVFQANQENLPILKRAVAGDASESALLKCIELCCGSVKEMRDRYAKIVEIPFNSTNKYQLSIHKNPNTSEPRHLLVMKGAPERILDRCSSILLHGKEQPLDEELKDALQNAYLELGGLGERVLGFRHLFLPDEQFPEGFQFDTDDVNFPVENLCFVGFISMIGPPRAAVPDAVGKCRGAGIKVIMVTGDHPITAKAIAKGAGIISEGNETVEDIAARLNIPVRQVNPRDAKACVVHGSDLKDMTSEQLDGILKYHTEIVFARTSPQQKLIIVEGCQRQGAIVAVTGDGVNDSPALKKADIGVAMGIVGSDASKQAADMILLDDNFASIVTGVEEGRLIFDNLKKSIAYTLTSNIPEITPFLIFIIANIPLPLGTVTILCIDLGTDMVPAISLAYEQAESDIMKRQPRNPKTDKLVNERLISMAYGQIGMIQALGGFFTYFVILAENGFLPTHLLGLRVDWDDRWINDVEDSYGQQWTYEQRKIVEFTCHTAFFVSIVVVQWADLVICKTRRNSVFQQGMKNKILIFGLFEETALAAFLSYCPGMGVALRMYPLKPTWWFCAFPYSLLIFVYDEVRKLIIRRRPGGWVEKETYY.

A propeptide spanning residues 1 to 5 (MGKGV) is cleaved from the precursor. Residues 1-11 (MGKGVGRDKYE) show a composition bias toward basic and acidic residues. A disordered region spans residues 1 to 36 (MGKGVGRDKYEPAAVSEHGDKKKAKKERDMDELKKE). Over 4–85 (GVGRDKYEPA…NALTPPPTTP (82 aa)) the chain is Cytoplasmic. K9 carries the N6-acetyllysine modification. Position 10 is a phosphotyrosine (Y10). Residue S16 is modified to Phosphoserine; by PKC. K21 is subject to N6-acetyllysine. Positions 26 to 36 (KERDMDELKKE) are enriched in basic and acidic residues. A phosphoserine mark is found at S38 and S45. A phosphoinositide-3 kinase binding region spans residues 80–82 (PPP). The helical transmembrane segment at 86–106 (EWVKFCRQLFGGFSMLLWIGA) threads the bilayer. The Extracellular segment spans residues 107 to 129 (ILCFLAYGIQAATEEEPQNDNLY). A helical membrane pass occupies residues 130–150 (LGVVLSAVVIITGCFSYYQEA). Residues 151-286 (KSSKIMESFK…GGQTPIAAEI (136 aa)) lie on the Cytoplasmic side of the membrane. The interval 214–233 (SSLTGESEPQTRSPDFTNEN) is disordered. S226 bears the Phosphoserine mark. Y258 is modified (phosphotyrosine). The chain crosses the membrane as a helical span at residues 287-306 (EHFIHIITGVAVFLGVSFFI). At 307-318 (LSLILEYTWLEA) the chain is on the extracellular side. The helical transmembrane segment at 319–336 (VIFLIGIIVANVPEGLLA) threads the bilayer. At 337-770 (TVTVCLTLTA…EEGRLIFDNL (434 aa)) the chain is on the cytoplasmic side. D374 functions as the 4-aspartylphosphate intermediate in the catalytic mechanism. Phosphoserine occurs at positions 450 and 482. K485 contributes to the ATP binding site. A Phosphotyrosine modification is found at Y540. The tract at residues 594-715 (RAAVPDAVGK…QGAIVAVTGD (122 aa)) is mediates interaction with SCN7A. At K659 the chain carries N6-succinyllysine. S666 and S673 each carry phosphoserine. The Mg(2+) site is built by D715 and D719. The helical transmembrane segment at 771–790 (KKSIAYTLTSNIPEITPFLI) threads the bilayer. Over 791 to 800 (FIIANIPLPL) the chain is Extracellular. Residues 801–821 (GTVTILCIDLGTDMVPAISLA) traverse the membrane as a helical segment. Topologically, residues 822–841 (YEQAESDIMKRQPRNPKTDK) are cytoplasmic. Residues 842-864 (LVNERLISMAYGQIGMIQALGGF) form a helical membrane-spanning segment. The Extracellular portion of the chain corresponds to 865 to 916 (FTYFVILAENGFLPTHLLGLRVDWDDRWINDVEDSYGQQWTYEQRKIVEFTC). The chain crosses the membrane as a helical span at residues 917-936 (HTAFFVSIVVVQWADLVICK). The Cytoplasmic segment spans residues 937–949 (TRRNSVFQQGMKN). Position 941 is a phosphoserine; by PKA (S941). A helical transmembrane segment spans residues 950-968 (KILIFGLFEETALAAFLSY). The Extracellular segment spans residues 969-983 (CPGMGVALRMYPLKP). A helical membrane pass occupies residues 984 to 1004 (TWWFCAFPYSLLIFVYDEVRK). Topologically, residues 1005-1021 (LIIRRRPGGWVEKETYY) are cytoplasmic.

It belongs to the cation transport ATPase (P-type) (TC 3.A.3) family. Type IIC subfamily. The sodium/potassium-transporting ATPase is composed of a catalytic alpha subunit, an auxiliary non-catalytic beta subunit and an additional regulatory subunit. Interacts with regulatory subunit FXYD1. Interacts with regulatory subunit FXYD3. Interacts with SIK1. Interacts with SLC35G1 and STIM1. Interacts with CLN3; this interaction regulates the sodium/potassium-transporting ATPase complex localization at the plasma membrane. Interacts with SCN7A; activates ATP1A1 P-type sodium:potassium-exchanging transporter activity which indirectly signals to nearby neurons to regulate sodium homeostasis. Post-translationally, phosphorylation on Tyr-10 modulates pumping activity. Phosphorylation of Ser-941 by PKA modulates the response of ATP1A1 to PKC. Dephosphorylation by protein phosphatase 2A (PP2A) following increases in intracellular sodium, leading to increase catalytic activity.

The protein localises to the cell membrane. It is found in the basolateral cell membrane. The protein resides in the sarcolemma. It localises to the cell projection. Its subcellular location is the axon. The protein localises to the melanosome. It catalyses the reaction K(+)(out) + Na(+)(in) + ATP + H2O = K(+)(in) + Na(+)(out) + ADP + phosphate + H(+). In terms of biological role, this is the catalytic component of the active enzyme, which catalyzes the hydrolysis of ATP coupled with the exchange of sodium and potassium ions across the plasma membrane. This action creates the electrochemical gradient of sodium and potassium ions, providing the energy for active transport of various nutrients. Could also be part of an osmosensory signaling pathway that senses body-fluid sodium levels and controls salt intake behavior as well as voluntary water intake to regulate sodium homeostasis. The chain is Sodium/potassium-transporting ATPase subunit alpha-1 (ATP1A1) from Canis lupus familiaris (Dog).